A 572-amino-acid chain; its full sequence is Solute carrier family 22 member 16 (572 aa).

A helical membrane pass occupies residues 21-41 (IFLYFICAFQNISCGIHYLAS). Asn-57 carries an N-linked (GlcNAc...) asparagine glycan. The next 5 helical transmembrane spans lie at 156–176 (LIQP…GYLS), 183–203 (LVLW…AFTF), 208–228 (FIVA…VVFV), 244–264 (IHLH…GYFV), and 268–288 (WIYQ…CWML). A glycan (N-linked (GlcNAc...) asparagine) is linked at Asn-315. Helical transmembrane passes span 359–379 (TLIL…FSLN), 389–409 (LNLF…CLGM), 416–436 (NILI…MVIP), 441–461 (VWLV…FGLI), 476–496 (LAVG…PLCI), and 503–523 (IFMP…LTFL). N-linked (GlcNAc...) asparagine glycosylation occurs at Asn-559.

Belongs to the major facilitator (TC 2.A.1) superfamily. Organic cation transporter (TC 2.A.1.19) family.

The protein localises to the cell membrane. It catalyses the reaction (R)-carnitine(in) = (R)-carnitine(out). It carries out the reaction spermidine(in) = spermidine(out). In terms of biological role, facilitative organic cation transporter that mediates the transport of carnitine as well as the polyamine spermidine. Mediates the partially Na(+)-dependent bidirectional transport of carnitine. May mediate L-carnitine secretion from testis epididymal epithelium into the lumen which is involved in the maturation of spermatozoa. This is Solute carrier family 22 member 16 (SLC22A16) from Bos taurus (Bovine).